A 59-amino-acid chain; its full sequence is MRLSYLSLALAIIFVLTIMHASNVEAKASADPEPDAVGSINVKNLMNMIREQITSRLKK.

The signal sequence occupies residues 1-21 (MRLSYLSLALAIIFVLTIMHA). Positions 22 to 38 (SNVEAKASADPEPDAVG) are excised as a propeptide.

As to expression, expressed by the venom gland.

The protein localises to the secreted. May have antimicrobial properties, like most ant linear peptides. This is U-myrmeciitoxin(01)-Mg5b from Myrmecia gulosa (Red bulldog ant).